Reading from the N-terminus, the 201-residue chain is UPF0177 protein YajF (201 aa).

The next 5 membrane-spanning stretches (helical) occupy residues 10 to 30 (TVILALFLLFLSQVPLYYVEY), 44 to 64 (ITVNFILIGLLIILIAIMLGI), 82 to 102 (ILILILIIPSVALDILFSQFI), 119 to 139 (VMGSLLWFGKILGVALLAPIL), and 159 to 179 (FVFSSLLFTFMHSGYSWVFLI).

It belongs to the UPF0177 family.

Its subcellular location is the cell membrane. The sequence is that of UPF0177 protein YajF (yajF) from Lactococcus lactis subsp. lactis (strain IL1403) (Streptococcus lactis).